The primary structure comprises 207 residues: Dephospho-CoA kinase (207 aa).

The region spanning 10-207 (ILGLTGGIGS…FYLTLKGGQP (198 aa)) is the DPCK domain. 18–23 (GSGKSA) lines the ATP pocket.

Belongs to the CoaE family.

The protein resides in the cytoplasm. It carries out the reaction 3'-dephospho-CoA + ATP = ADP + CoA + H(+). It functions in the pathway cofactor biosynthesis; coenzyme A biosynthesis; CoA from (R)-pantothenate: step 5/5. Its function is as follows. Catalyzes the phosphorylation of the 3'-hydroxyl group of dephosphocoenzyme A to form coenzyme A. The protein is Dephospho-CoA kinase of Pseudomonas putida (strain ATCC 47054 / DSM 6125 / CFBP 8728 / NCIMB 11950 / KT2440).